Here is a 126-residue protein sequence, read N- to C-terminus: Large ribosomal subunit protein bL17 (126 aa).

Belongs to the bacterial ribosomal protein bL17 family. As to quaternary structure, part of the 50S ribosomal subunit. Contacts protein L32.

The sequence is that of Large ribosomal subunit protein bL17 from Xylella fastidiosa (strain 9a5c).